The sequence spans 130 residues: Glycine cleavage system H protein (130 aa).

In terms of domain architecture, Lipoyl-binding spans 25–107; the sequence is IATIGITEFA…YGEGWFLKVR (83 aa). Lys66 is modified (N6-lipoyllysine).

It belongs to the GcvH family. In terms of assembly, the glycine cleavage system is composed of four proteins: P, T, L and H. (R)-lipoate is required as a cofactor.

Its function is as follows. The glycine cleavage system catalyzes the degradation of glycine. The H protein shuttles the methylamine group of glycine from the P protein to the T protein. This chain is Glycine cleavage system H protein, found in Trichormus variabilis (strain ATCC 29413 / PCC 7937) (Anabaena variabilis).